Reading from the N-terminus, the 73-residue chain is Large ribosomal subunit protein bL31 (73 aa).

Belongs to the bacterial ribosomal protein bL31 family. Type A subfamily. As to quaternary structure, part of the 50S ribosomal subunit.

In terms of biological role, binds the 23S rRNA. This is Large ribosomal subunit protein bL31 from Rhizobium johnstonii (strain DSM 114642 / LMG 32736 / 3841) (Rhizobium leguminosarum bv. viciae).